Reading from the N-terminus, the 370-residue chain is 3-dehydroquinate synthase (370 aa).

NAD(+) contacts are provided by residues 70–75 (DAEDGK), 104–108 (GAATD), 128–129 (TT), K141, K150, and 168–171 (TLET). Zn(2+) is bound by residues E183, H246, and H262.

Belongs to the sugar phosphate cyclases superfamily. Dehydroquinate synthase family. Requires Co(2+) as cofactor. It depends on Zn(2+) as a cofactor. NAD(+) is required as a cofactor.

Its subcellular location is the cytoplasm. The catalysed reaction is 7-phospho-2-dehydro-3-deoxy-D-arabino-heptonate = 3-dehydroquinate + phosphate. It functions in the pathway metabolic intermediate biosynthesis; chorismate biosynthesis; chorismate from D-erythrose 4-phosphate and phosphoenolpyruvate: step 2/7. Its function is as follows. Catalyzes the conversion of 3-deoxy-D-arabino-heptulosonate 7-phosphate (DAHP) to dehydroquinate (DHQ). This is 3-dehydroquinate synthase from Rhodococcus opacus (strain B4).